The following is a 467-amino-acid chain: ATP synthase subunit beta (467 aa).

Position 150–157 (150–157 (GGAGVGKT)) interacts with ATP.

The protein belongs to the ATPase alpha/beta chains family. In terms of assembly, F-type ATPases have 2 components, CF(1) - the catalytic core - and CF(0) - the membrane proton channel. CF(1) has five subunits: alpha(3), beta(3), gamma(1), delta(1), epsilon(1). CF(0) has three main subunits: a(1), b(2) and c(9-12). The alpha and beta chains form an alternating ring which encloses part of the gamma chain. CF(1) is attached to CF(0) by a central stalk formed by the gamma and epsilon chains, while a peripheral stalk is formed by the delta and b chains.

It localises to the cell inner membrane. The enzyme catalyses ATP + H2O + 4 H(+)(in) = ADP + phosphate + 5 H(+)(out). Produces ATP from ADP in the presence of a proton gradient across the membrane. The catalytic sites are hosted primarily by the beta subunits. This Vibrio parahaemolyticus serotype O3:K6 (strain RIMD 2210633) protein is ATP synthase subunit beta.